The chain runs to 483 residues: Betaine aldehyde dehydrogenase (483 aa).

Residues Ile27 and Asp93 each coordinate K(+). 149–151 (GAW) lines the NAD(+) pocket. Lys161 acts as the Charge relay system in catalysis. NAD(+) is bound at residue 175–178 (KPSE). Val179 provides a ligand contact to K(+). 228-231 (SVPT) is an NAD(+) binding site. Val243 lines the K(+) pocket. Glu249 serves as the catalytic Proton acceptor. The NAD(+) site is built by Gly251, Cys283, and Glu380. Cys283 (nucleophile) is an active-site residue. Cys283 carries the post-translational modification Cysteine sulfenic acid (-SOH). The K(+) site is built by Lys450 and Gly453. Residue Glu457 is the Charge relay system of the active site.

This sequence belongs to the aldehyde dehydrogenase family. As to quaternary structure, dimer of dimers. The cofactor is K(+).

The enzyme catalyses betaine aldehyde + NAD(+) + H2O = glycine betaine + NADH + 2 H(+). Its pathway is amine and polyamine biosynthesis; betaine biosynthesis via choline pathway; betaine from betaine aldehyde: step 1/1. Involved in the biosynthesis of the osmoprotectant glycine betaine. Catalyzes the irreversible oxidation of betaine aldehyde to the corresponding acid. In Cereibacter sphaeroides (strain ATCC 17029 / ATH 2.4.9) (Rhodobacter sphaeroides), this protein is Betaine aldehyde dehydrogenase.